The following is a 313-amino-acid chain: Formimidoylglutamase (313 aa).

Mn(2+)-binding residues include His-130, Asp-155, His-157, Asp-159, Asp-241, and Asp-243.

This sequence belongs to the arginase family. It depends on Mn(2+) as a cofactor.

The catalysed reaction is N-formimidoyl-L-glutamate + H2O = formamide + L-glutamate. It functions in the pathway amino-acid degradation; L-histidine degradation into L-glutamate; L-glutamate from N-formimidoyl-L-glutamate (hydrolase route): step 1/1. Catalyzes the conversion of N-formimidoyl-L-glutamate to L-glutamate and formamide. This Salmonella paratyphi A (strain ATCC 9150 / SARB42) protein is Formimidoylglutamase.